A 333-amino-acid chain; its full sequence is HTH-type transcriptional repressor PurR (333 aa).

An HTH lacI-type domain is found at 2–56; that stretch reads ATIKDVAKMAGVSTTTVSHVINKTRFVAKETEQQVLQAIKNLNYSPSAVARSLKV. The H-T-H motif DNA-binding region spans 4–23; the sequence is IKDVAKMAGVSTTTVSHVIN. A DNA-binding region spans residues 48-56; sequence SAVARSLKV. The hypoxanthine site is built by Y73, K189, T191, F220, and D274.

As to quaternary structure, homodimer.

Its pathway is purine metabolism; purine nucleotide biosynthesis [regulation]. Its function is as follows. Is the main repressor of the genes involved in the de novo synthesis of purine nucleotides, regulating purB, purC, purEK, purF, purHD, purL, purMN and guaBA expression. PurR is allosterically activated to bind its cognate DNA by binding the purine corepressors, hypoxanthine or guanine, thereby effecting transcription repression. This is HTH-type transcriptional repressor PurR from Histophilus somni (strain 2336) (Haemophilus somnus).